Here is a 216-residue protein sequence, read N- to C-terminus: MALCLKQVFAKDKTFRPRKRFEPGTQRFELYKKAQASLKSGLDLRSVVRLPPGESIDDWIAVHVVDFFNRINLIYGTMAEHCSESSCPVMAGGPRYEYRWQDERQYRRPAKLSAPRYMALLMDWIEGLINDEDVFPTRVGVPFPKNFQQVCTKILTRLFRVFVHVYIHHFDSILSMGAEAHVNTCYKHFYYFIQEFSLVDQRELEPLREMTERICH.

Zn(2+) contacts are provided by cysteine 82, cysteine 87, histidine 164, and histidine 169.

Belongs to the MOB1/phocein family.

May regulate the activity of kinases. The chain is MOB kinase activator 3C (Mob3c) from Mus musculus (Mouse).